Consider the following 173-residue polypeptide: CKLF-like MARVEL transmembrane domain-containing protein 8 (173 aa).

Positions 36–168 (FLRTPPGLLI…NTYFSFIAWR (133 aa)) constitute an MARVEL domain. 4 helical membrane-spanning segments follow: residues 41–61 (PGLLIVAEIVLGLLVWTLIAG), 70–90 (FGWVMFVAVFYWVLTVFFLIV), 105–125 (TTVGLCFNGSAFVLYFSAAIV), and 147–167 (FFAFLVTICYAGNTYFSFIAW).

It belongs to the chemokine-like factor family.

The protein resides in the membrane. The protein is CKLF-like MARVEL transmembrane domain-containing protein 8 (Cmtm8) of Mus musculus (Mouse).